The primary structure comprises 407 residues: Na(+)-translocating NADH-quinone reductase subunit F (407 aa).

A helical transmembrane segment spans residues 3–23 (IILGVVMFTLIVLALTVMILF). Residues 32-126 (GDITIDINED…NLKIELPEEI (95 aa)) form the 2Fe-2S ferredoxin-type domain. The [2Fe-2S] cluster site is built by Cys69, Cys75, Cys78, and Cys110. The FAD-binding FR-type domain occupies 129 to 269 (VKKWECEVIS…SGPFGEFFAK (141 aa)).

It belongs to the NqrF family. In terms of assembly, composed of six subunits; NqrA, NqrB, NqrC, NqrD, NqrE and NqrF. Requires [2Fe-2S] cluster as cofactor. FAD is required as a cofactor.

The protein localises to the cell inner membrane. It carries out the reaction a ubiquinone + n Na(+)(in) + NADH + H(+) = a ubiquinol + n Na(+)(out) + NAD(+). Functionally, NQR complex catalyzes the reduction of ubiquinone-1 to ubiquinol by two successive reactions, coupled with the transport of Na(+) ions from the cytoplasm to the periplasm. The first step is catalyzed by NqrF, which accepts electrons from NADH and reduces ubiquinone-1 to ubisemiquinone by a one-electron transfer pathway. This is Na(+)-translocating NADH-quinone reductase subunit F from Yersinia enterocolitica serotype O:8 / biotype 1B (strain NCTC 13174 / 8081).